A 382-amino-acid polypeptide reads, in one-letter code: Opsin Rh3 (382 aa).

The Extracellular segment spans residues 1–56; that stretch reads MEYHNVSSVLGNVSSVLRPDARLSAESRLLGWNVPPDELRHIPEHWLIYPEPPESM. Asn-12 is a glycosylation site (N-linked (GlcNAc...) asparagine). A helical membrane pass occupies residues 57 to 81; that stretch reads NYLLGTLYIFFTVISMIGNGLVMWV. Residues 82 to 93 are Cytoplasmic-facing; that stretch reads FSAAKSLRTPSN. A helical transmembrane segment spans residues 94–118; it reads ILVINLAFCDFMMMIKTPIFIYNSF. The Extracellular portion of the chain corresponds to 119 to 132; that stretch reads HQGYALGHLGCQIF. A disulfide bridge links Cys-129 with Cys-206. A helical transmembrane segment spans residues 133–152; sequence GVIGSYTGIAAGATNAFIAY. Residues 153–170 lie on the Cytoplasmic side of the membrane; that stretch reads DRYNVITRPMEGKMTHGK. A helical membrane pass occupies residues 171–195; it reads AIAMIIFIYLYATPWVVACYTESWG. Residues 196–219 are Extracellular-facing; the sequence is RFVPEGYLTSCTFDYLTDNFDTRL. The helical transmembrane segment at 220 to 247 threads the bilayer; the sequence is FVACIFFFSFVCPTTMITYYYSQIVGHV. Residues 248–283 are Cytoplasmic-facing; sequence FSHEKALRDQAKKMNVDSLRSNVDKSKEAAEIRIAK. Residues 284–307 form a helical membrane-spanning segment; that stretch reads AAITICFLFFASWTPYGVMSLIGA. Residues 308–315 lie on the Extracellular side of the membrane; that stretch reads FGDKTLLT. Residues 316-340 traverse the membrane as a helical segment; sequence PGATMIPACTCKMVACIDPFVYAIS. Lys-327 bears the N6-(retinylidene)lysine mark. Topologically, residues 341–382 are cytoplasmic; it reads HPRYRMELQKRCPWLAISEKAPESAAAISTSTTQEQQQTTAA.

Belongs to the G-protein coupled receptor 1 family. Opsin subfamily. Phosphorylated on some or all of the serine and threonine residues present in the C-terminal region.

It localises to the membrane. In terms of biological role, visual pigments are the light-absorbing molecules that mediate vision. They consist of an apoprotein, opsin, covalently linked to cis-retinal. In Drosophila pseudoobscura pseudoobscura (Fruit fly), this protein is Opsin Rh3 (Rh3).